Reading from the N-terminus, the 1372-residue chain is DNA-directed RNA polymerase subunit beta (1372 aa).

Belongs to the RNA polymerase beta chain family. The RNAP catalytic core consists of 2 alpha, 1 beta, 1 beta' and 1 omega subunit. When a sigma factor is associated with the core the holoenzyme is formed, which can initiate transcription.

The catalysed reaction is RNA(n) + a ribonucleoside 5'-triphosphate = RNA(n+1) + diphosphate. Functionally, DNA-dependent RNA polymerase catalyzes the transcription of DNA into RNA using the four ribonucleoside triphosphates as substrates. The protein is DNA-directed RNA polymerase subunit beta of Bradyrhizobium sp. (strain ORS 278).